A 407-amino-acid chain; its full sequence is Multifunctional CCA protein (407 aa).

2 residues coordinate ATP: Gly-8 and Arg-11. Residues Gly-8 and Arg-11 each contribute to the CTP site. Residues Asp-21 and Asp-23 each coordinate Mg(2+). ATP-binding residues include Arg-91, Arg-137, and Arg-140. 3 residues coordinate CTP: Arg-91, Arg-137, and Arg-140. Positions 228–329 constitute an HD domain; that stretch reads TGIHTLMVAQ…IKIFDKMDVW (102 aa).

Belongs to the tRNA nucleotidyltransferase/poly(A) polymerase family. Bacterial CCA-adding enzyme type 1 subfamily. In terms of assembly, monomer. Can also form homodimers and oligomers. Requires Mg(2+) as cofactor. Ni(2+) is required as a cofactor.

It carries out the reaction a tRNA precursor + 2 CTP + ATP = a tRNA with a 3' CCA end + 3 diphosphate. The catalysed reaction is a tRNA with a 3' CCA end + 2 CTP + ATP = a tRNA with a 3' CCACCA end + 3 diphosphate. In terms of biological role, catalyzes the addition and repair of the essential 3'-terminal CCA sequence in tRNAs without using a nucleic acid template. Adds these three nucleotides in the order of C, C, and A to the tRNA nucleotide-73, using CTP and ATP as substrates and producing inorganic pyrophosphate. tRNA 3'-terminal CCA addition is required both for tRNA processing and repair. Also involved in tRNA surveillance by mediating tandem CCA addition to generate a CCACCA at the 3' terminus of unstable tRNAs. While stable tRNAs receive only 3'-terminal CCA, unstable tRNAs are marked with CCACCA and rapidly degraded. In Aliivibrio fischeri (strain ATCC 700601 / ES114) (Vibrio fischeri), this protein is Multifunctional CCA protein.